Here is a 164-residue protein sequence, read N- to C-terminus: uncharacterized protein (164 aa).

A disordered region spans residues 107–136 (QSESGGSGSNSRSSSDTTEPTDPPAPVRKT).

This is an uncharacterized protein from Escherichia coli (Bacteriophage T4).